Consider the following 335-residue polypeptide: Nicotinate-nucleotide--dimethylbenzimidazole phosphoribosyltransferase (335 aa).

E304 functions as the Proton acceptor in the catalytic mechanism.

This sequence belongs to the CobT family.

The catalysed reaction is 5,6-dimethylbenzimidazole + nicotinate beta-D-ribonucleotide = alpha-ribazole 5'-phosphate + nicotinate + H(+). Its pathway is nucleoside biosynthesis; alpha-ribazole biosynthesis; alpha-ribazole from 5,6-dimethylbenzimidazole: step 1/2. Its function is as follows. Catalyzes the synthesis of alpha-ribazole-5'-phosphate from nicotinate mononucleotide (NAMN) and 5,6-dimethylbenzimidazole (DMB). The polypeptide is Nicotinate-nucleotide--dimethylbenzimidazole phosphoribosyltransferase (Thermus thermophilus (strain ATCC 27634 / DSM 579 / HB8)).